The sequence spans 60 residues: Large ribosomal subunit protein bL32 (60 aa).

Residues 1–21 form a disordered region; that stretch reads MAVPARHTSKAKKNKRRTHYK. Basic residues predominate over residues 7–20; sequence HTSKAKKNKRRTHY.

It belongs to the bacterial ribosomal protein bL32 family.

This Streptococcus uberis (strain ATCC BAA-854 / 0140J) protein is Large ribosomal subunit protein bL32.